We begin with the raw amino-acid sequence, 213 residues long: Glutathione S-transferase DHAR1, mitochondrial (213 aa).

Residues Lys-8 and Asp-19 each coordinate glutathione. The L-ascorbate site is built by Lys-8 and Asp-19. A GST N-terminal domain is found at 10–83; sequence AVGAPDHLGD…DVIVGILEEK (74 aa). Cys-20 acts as the Nucleophile in catalysis. Residue Cys-20 is modified to S-glutathionyl cysteine. A Glutathione-binding motif is present at residues 20 to 25; sequence CPFSQR. 3 residues coordinate glutathione: Lys-47, Val-60, and Ser-73. The region spanning 84 to 213 is the GST C-terminal domain; it reads YPDPPLKTPA…ISGWAPKVNP (130 aa). Positions 133–137 match the Copper-binding motif; it reads HLKSH. Residues His-160 and Trp-207 each coordinate glutathione. Lys-210 contacts L-ascorbate.

It belongs to the GST superfamily. DHAR family. Monomer. Interacts with copper (Cu). In terms of processing, spontaneous S-glutathionylation in the presence of oxidized glutathione (GSSG). Expressed at least in roots and leaves.

Its subcellular location is the mitochondrion. The protein localises to the cytoplasm. The protein resides in the cytosol. It localises to the peroxisome. It is found in the membrane. It catalyses the reaction RX + glutathione = an S-substituted glutathione + a halide anion + H(+). The enzyme catalyses L-dehydroascorbate + 2 glutathione = glutathione disulfide + L-ascorbate. Functionally, displays a dual function. As a soluble protein, exhibits glutathione-dependent thiol transferase and dehydroascorbate (DHA) reductase activities. Key component of the ascorbate recycling system. Involved in the redox homeostasis, especially in scavenging of ROS under oxidative stresses, subsequently to biotic or abiotic inducers. As a peripheral membrane protein, could also function as voltage-gated ion channel. The sequence is that of Glutathione S-transferase DHAR1, mitochondrial from Arabidopsis thaliana (Mouse-ear cress).